The chain runs to 113 residues: Large ribosomal subunit protein uL24 (113 aa).

The protein belongs to the universal ribosomal protein uL24 family. Part of the 50S ribosomal subunit.

One of two assembly initiator proteins, it binds directly to the 5'-end of the 23S rRNA, where it nucleates assembly of the 50S subunit. In terms of biological role, one of the proteins that surrounds the polypeptide exit tunnel on the outside of the subunit. The polypeptide is Large ribosomal subunit protein uL24 (Synechococcus sp. (strain RCC307)).